A 785-amino-acid chain; its full sequence is uncharacterized protein (785 aa).

The DOD-type homing endonuclease domain maps to 293–421 (LVGYFLSEGY…LRLISLRLGF (129 aa)).

Post-translationally, this protein undergoes a protein self splicing that involves a post-translational excision of the intervening region (intein) followed by peptide ligation.

This is an uncharacterized protein from Methanocaldococcus jannaschii (strain ATCC 43067 / DSM 2661 / JAL-1 / JCM 10045 / NBRC 100440) (Methanococcus jannaschii).